Here is a 443-residue protein sequence, read N- to C-terminus: Ribitol-5-phosphate xylosyltransferase 1 (443 aa).

Topologically, residues 1 to 9 (MRLTRKRLC) are cytoplasmic. A helical; Signal-anchor for type II membrane protein membrane pass occupies residues 10–30 (SFLIALYCLFSLYAAYHVFFG). The Extracellular segment spans residues 31 to 443 (RRRQAPAGSP…ESSFLMNNKS (413 aa)). The disordered stretch occupies residues 35-76 (APAGSPRGLRKGAAPARERRGREQSTLESEEWNPWEGDEKNE). The segment covering 50 to 59 (ARERRGREQS) has biased composition (basic and acidic residues).

It belongs to the RXYLT1 family. As to quaternary structure, forms a complex composed of FKTN/fukutin, FKRP and RXYLT1/TMEM5.

The protein localises to the golgi apparatus membrane. It carries out the reaction 3-O-[Rib-ol-P-Rib-ol-P-3-beta-D-GalNAc-(1-&gt;3)-beta-D-GlcNAc-(1-&gt;4)-(O-6-P-alpha-D-Man)]-Thr-[protein] + UDP-alpha-D-xylose = 3-O-[beta-D-Xyl-(1-&gt;4)-Rib-ol-P-Rib-ol-P-3-beta-D-GalNAc-(1-&gt;3)-beta-D-GlcNAc-(1-&gt;4)-(O-6-P-alpha-D-Man)]-Thr-[protein] + UDP + H(+). The protein operates within protein modification; protein glycosylation. Its function is as follows. Acts as a UDP-D-xylose:ribitol-5-phosphate beta1,4-xylosyltransferase, which catalyzes the transfer of UDP-D-xylose to ribitol 5-phosphate (Rbo5P) to form the Xylbeta1-4Rbo5P linkage on O-mannosyl glycan. Participates in the biosynthesis of the phosphorylated O-mannosyl trisaccharide (N-acetylgalactosamine-beta-3-N-acetylglucosamine-beta-4-(phosphate-6-)mannose), a carbohydrate structure present in alpha-dystroglycan (DAG1), which is required for binding laminin G-like domain-containing extracellular proteins with high affinity. In Homo sapiens (Human), this protein is Ribitol-5-phosphate xylosyltransferase 1.